Reading from the N-terminus, the 160-residue chain is Snaclec subunit A (160 aa).

Positions 1–23 (MGRFILVNLGLLVVAFSLRGSEA) are cleaved as a signal peptide. 3 disulfides stabilise this stretch: C25–C36, C53–C150, and C125–C142. One can recognise a C-type lectin domain in the interval 32-151 (YDKYCYKVFD…CDFTLPFICK (120 aa)).

The protein belongs to the snaclec family. In terms of assembly, heterodimer of subunits A and B; disulfide-linked. Expressed by the venom gland.

The protein resides in the secreted. Interferes with one step of hemostasis (modulation of platelet aggregation, or coagulation cascade, for example). This Philodryas olfersii (Green snake) protein is Snaclec subunit A.